Reading from the N-terminus, the 302-residue chain is Methionyl-tRNA formyltransferase (302 aa).

Residue 108–111 coordinates (6S)-5,6,7,8-tetrahydrofolate; that stretch reads SILP.

This sequence belongs to the Fmt family.

The catalysed reaction is L-methionyl-tRNA(fMet) + (6R)-10-formyltetrahydrofolate = N-formyl-L-methionyl-tRNA(fMet) + (6S)-5,6,7,8-tetrahydrofolate + H(+). In terms of biological role, attaches a formyl group to the free amino group of methionyl-tRNA(fMet). The formyl group appears to play a dual role in the initiator identity of N-formylmethionyl-tRNA by promoting its recognition by IF2 and preventing the misappropriation of this tRNA by the elongation apparatus. The polypeptide is Methionyl-tRNA formyltransferase (Sulfurimonas denitrificans (strain ATCC 33889 / DSM 1251) (Thiomicrospira denitrificans (strain ATCC 33889 / DSM 1251))).